The primary structure comprises 255 residues: Zinc import ATP-binding protein ZnuC (255 aa).

Residues 5–220 enclose the ABC transporter domain; sequence VALEHIAVAF…PDFIAMFGYR (216 aa).

The protein belongs to the ABC transporter superfamily. Zinc importer (TC 3.A.1.15.5) family. In terms of assembly, the complex is composed of two ATP-binding proteins (ZnuC), two transmembrane proteins (ZnuB) and a solute-binding protein (ZnuA).

Its subcellular location is the cell inner membrane. The catalysed reaction is Zn(2+)(out) + ATP(in) + H2O(in) = Zn(2+)(in) + ADP(in) + phosphate(in) + H(+)(in). Functionally, part of the ABC transporter complex ZnuABC involved in zinc import. Responsible for energy coupling to the transport system. The protein is Zinc import ATP-binding protein ZnuC of Sodalis glossinidius (strain morsitans).